The following is a 774-amino-acid chain: E3 ubiquitin-protein ligase RFWD3 (774 aa).

Serine 46 and serine 63 each carry phosphoserine; by ATM and ATR. Disordered stretches follow at residues asparagine 95–serine 116, proline 139–glycine 225, and glycine 257–aspartate 280. The span at serine 106–serine 116 shows a compositional bias: polar residues. The span at arginine 150–arginine 162 shows a compositional bias: basic residues. The segment covering serine 211 to serine 221 has biased composition (low complexity). The RING-type; degenerate zinc finger occupies cysteine 287–asparagine 331. Positions serine 361–glutamine 413 form a coiled coil. 3 WD repeats span residues methionine 495–asparagine 537, glycine 539–glutamine 577, and lysine 583–proline 628.

In terms of assembly, interacts with MDM2 and p53/TP53. Binds to the RPA complex via direct interaction with RPA2. Interacts with RAD51. In terms of processing, phosphorylated at Ser-46 and Ser-63 upon DNA damage by ATM or ATR. ATM phosphorylation occurs at early times upon DNA damage, while ATR is the major kinase at later times. Phosphorylation by ATM and ATR is required to stabilize p53/TP53. Part of the phosphorylation depends upon RPA2 presence.

It is found in the nucleus. The protein resides in the PML body. It localises to the cytoplasm. The enzyme catalyses S-ubiquitinyl-[E2 ubiquitin-conjugating enzyme]-L-cysteine + [acceptor protein]-L-lysine = [E2 ubiquitin-conjugating enzyme]-L-cysteine + N(6)-ubiquitinyl-[acceptor protein]-L-lysine.. It participates in protein modification; protein ubiquitination. Its function is as follows. E3 ubiquitin-protein ligase required for the repair of DNA interstrand cross-links (ICL) in response to DNA damage. Plays a key role in RPA-mediated DNA damage signaling and repair. Acts by mediating ubiquitination of the RPA complex (RPA1, RPA2 and RPA3 subunits) and RAD51 at stalled replication forks, leading to remove them from DNA damage sites and promote homologous recombination. Also mediates the ubiquitination of p53/TP53 in the late response to DNA damage, and acts as a positive regulator of p53/TP53 stability, thereby regulating the G1/S DNA damage checkpoint. May act by catalyzing the formation of short polyubiquitin chains on p53/TP53 that are not targeted to the proteasome. In response to ionizing radiation, interacts with MDM2 and enhances p53/TP53 ubiquitination, possibly by restricting MDM2 from extending polyubiquitin chains on ubiquitinated p53/TP53. Required to translesion DNA synthesis across DNA-protein cross-link adducts by catalyzing ubiquitination of proteins on single-stranded DNA (ssDNA). The polypeptide is E3 ubiquitin-protein ligase RFWD3 (Homo sapiens (Human)).